Reading from the N-terminus, the 462-residue chain is Cytochrome P450 20A1 (462 aa).

Residues Phe4–Pro24 traverse the membrane as a helical segment. Residue Cys409 participates in heme binding.

It belongs to the cytochrome P450 family. It depends on heme as a cofactor.

The protein resides in the membrane. The protein is Cytochrome P450 20A1 (CYP20A1) of Homo sapiens (Human).